The chain runs to 498 residues: Protein MGF 505-5R (498 aa).

Belongs to the asfivirus MGF 505 family.

In terms of biological role, plays a role in virus cell tropism, and may be required for efficient virus replication in macrophages. The chain is Protein MGF 505-5R from African swine fever virus (strain Badajoz 1971 Vero-adapted) (Ba71V).